The chain runs to 885 residues: Alanine--tRNA ligase (885 aa).

Residues His571, His575, Cys674, and His678 each coordinate Zn(2+).

It belongs to the class-II aminoacyl-tRNA synthetase family. Requires Zn(2+) as cofactor.

It is found in the cytoplasm. It catalyses the reaction tRNA(Ala) + L-alanine + ATP = L-alanyl-tRNA(Ala) + AMP + diphosphate. In terms of biological role, catalyzes the attachment of alanine to tRNA(Ala) in a two-step reaction: alanine is first activated by ATP to form Ala-AMP and then transferred to the acceptor end of tRNA(Ala). Also edits incorrectly charged Ser-tRNA(Ala) and Gly-tRNA(Ala) via its editing domain. This chain is Alanine--tRNA ligase, found in Clavibacter michiganensis subsp. michiganensis (strain NCPPB 382).